We begin with the raw amino-acid sequence, 546 residues long: Glucose-6-phosphate isomerase (546 aa).

Glutamate 353 functions as the Proton donor in the catalytic mechanism. Active-site residues include histidine 384 and lysine 512.

The protein belongs to the GPI family.

The protein resides in the cytoplasm. It catalyses the reaction alpha-D-glucose 6-phosphate = beta-D-fructose 6-phosphate. It participates in carbohydrate biosynthesis; gluconeogenesis. Its pathway is carbohydrate degradation; glycolysis; D-glyceraldehyde 3-phosphate and glycerone phosphate from D-glucose: step 2/4. Functionally, catalyzes the reversible isomerization of glucose-6-phosphate to fructose-6-phosphate. The chain is Glucose-6-phosphate isomerase from Actinobacillus pleuropneumoniae serotype 3 (strain JL03).